A 637-amino-acid chain; its full sequence is DNA damage-binding protein CMR1 (637 aa).

2 disordered regions span residues 1–91 (MIES…EEEA) and 144–168 (LVDT…TERR). Basic and acidic residues-rich tracts occupy residues 8 to 23 (EQER…RLMK) and 74 to 91 (AGHE…EEEA). WD repeat units lie at residues 185–226 (VTPK…FASN), 255–295 (HARS…SEEI), 297–321 (AGEE…VYMD), 361–401 (VCEK…SVVK), and 431–470 (KARQ…LFSE). Disordered stretches follow at residues 482–508 (SNKP…LSWL) and 525–549 (KQEQ…PTRI). 2 WD repeats span residues 556–598 (GKWL…LRSL) and 602–637 (NLVT…SPDP).

Belongs to the WD repeat DDB2/WDR76 family.

In terms of biological role, DNA-binding protein that binds to both single- and double-stranded DNA. Binds preferentially to UV-damaged DNA. May be involved in DNA-metabolic processes. The polypeptide is DNA damage-binding protein CMR1 (Mycosarcoma maydis (Corn smut fungus)).